The primary structure comprises 41 residues: Large ribosomal subunit protein bL36 (41 aa).

It belongs to the bacterial ribosomal protein bL36 family.

The chain is Large ribosomal subunit protein bL36 from Pelagibacter ubique (strain HTCC1062).